Reading from the N-terminus, the 140-residue chain is L-fucose mutarotase (140 aa).

His22 functions as the Proton donor in the catalytic mechanism. Residues Asp30, Arg107, and 129-131 (YGN) contribute to the substrate site.

The protein belongs to the RbsD / FucU family. FucU mutarotase subfamily. Homodecamer.

It localises to the cytoplasm. It catalyses the reaction alpha-L-fucose = beta-L-fucose. It functions in the pathway carbohydrate metabolism; L-fucose metabolism. In terms of biological role, involved in the anomeric conversion of L-fucose. This is L-fucose mutarotase from Salmonella typhimurium (strain LT2 / SGSC1412 / ATCC 700720).